The primary structure comprises 213 residues: Protein HSH49 (213 aa).

2 consecutive RRM domains span residues 9–88 (NTVY…QVTN) and 108–185 (AKLF…YAFK).

As to quaternary structure, interacts with RDS3.

Its subcellular location is the nucleus. Possible SF3b-like factor. The sequence is that of Protein HSH49 (HSH49) from Saccharomyces cerevisiae (strain ATCC 204508 / S288c) (Baker's yeast).